A 420-amino-acid chain; its full sequence is Tyrosine--tRNA ligase (420 aa).

Tyr-33 contributes to the L-tyrosine binding site. Residues 38–47 carry the 'HIGH' region motif; that stretch reads PTADSLHVGH. Residues Tyr-167 and Gln-171 each coordinate L-tyrosine. The 'KMSKS' region motif lies at 227 to 231; that stretch reads KFGKT. An ATP-binding site is contributed by Lys-230. Residues 353-419 form the S4 RNA-binding domain; the sequence is LTVADLLVKV…GKRNYALVKV (67 aa).

Belongs to the class-I aminoacyl-tRNA synthetase family. TyrS type 1 subfamily. In terms of assembly, homodimer.

The protein localises to the cytoplasm. The catalysed reaction is tRNA(Tyr) + L-tyrosine + ATP = L-tyrosyl-tRNA(Tyr) + AMP + diphosphate + H(+). Functionally, catalyzes the attachment of tyrosine to tRNA(Tyr) in a two-step reaction: tyrosine is first activated by ATP to form Tyr-AMP and then transferred to the acceptor end of tRNA(Tyr). The protein is Tyrosine--tRNA ligase of Anaeromyxobacter dehalogenans (strain 2CP-1 / ATCC BAA-258).